An 84-amino-acid chain; its full sequence is MAHKKAGGSSRNGRDSKGQRLGCKKFGGETVKAGNIIYRQRGTQIHPGNNVGCGKDYTLFALIEGIVTFERMGRDRKKVSVYPN.

The interval 1-24 (MAHKKAGGSSRNGRDSKGQRLGCK) is disordered.

The protein belongs to the bacterial ribosomal protein bL27 family.

The sequence is that of Large ribosomal subunit protein bL27 from Pelobacter propionicus (strain DSM 2379 / NBRC 103807 / OttBd1).